The following is a 308-amino-acid chain: Palmitoyltransferase ZDHHC7 (308 aa).

At Met-1–Cys-50 the chain is on the cytoplasmic side. Residues Ala-51–Leu-71 traverse the membrane as a helical segment. Over Pro-72–Asp-75 the chain is Lumenal. A helical membrane pass occupies residues Phe-76–Ser-96. The Cytoplasmic segment spans residues His-97–Arg-173. The DHHC domain maps to Tyr-130–Met-180. Cys-160 functions as the S-palmitoyl cysteine intermediate in the catalytic mechanism. A helical transmembrane segment spans residues Phe-174 to Gly-194. The Lumenal segment spans residues Leu-195–Val-217. The chain crosses the membrane as a helical span at residues Ile-218–Phe-238. At Gly-239 to Val-308 the chain is on the cytoplasmic side.

It belongs to the DHHC palmitoyltransferase family. As to quaternary structure, homooligomers. Heterooligomers with ZDHHC3. In terms of processing, autopalmitoylated. In terms of tissue distribution, ubiquitously expressed, with highest levels in liver, kidney and brain. Expressed in all brain regions.

It localises to the golgi apparatus membrane. It catalyses the reaction L-cysteinyl-[protein] + hexadecanoyl-CoA = S-hexadecanoyl-L-cysteinyl-[protein] + CoA. The enzyme catalyses L-cysteinyl-[protein] + tetradecanoyl-CoA = S-tetradecanoyl-L-cysteinyl-[protein] + CoA. The catalysed reaction is L-cysteinyl-[protein] + octadecanoyl-CoA = S-octadecanoyl-L-cysteinyl-[protein] + CoA. Functionally, golgi-localized palmitoyltransferase that catalyzes the addition of palmitate onto various protein substrates and therefore functions in several unrelated biological processes. Has no stringent fatty acid selectivity and in addition to palmitate can also transfer onto target proteins myristate from tetradecanoyl-CoA and stearate from octadecanoyl-CoA. Palmitoylates sex steroid hormone receptors, including ESR1, PGR and AR, thereby regulating their targeting to the plasma membrane and their function in rapid intracellular signaling upon binding of sex hormones. Palmitoylates GNAQ, a heterotrimeric G protein, regulating its dynamic localization at the plasma membrane and is thereby involved in GNAQ-dependent G protein-coupled receptor signaling pathways. Also functions in ligand-induced cell death by regulating the FAS signaling pathway through the palmitoylation and stabilization of the receptor at the plasma membrane. In epithelial cells, palmitoylates SCRIB and regulates its localization to the plasma membrane, regulating indirectly cell polarity and differentiation. Also palmitoylates JAM3 and promotes its expression at tight junctions and regulates its function in cell migration. Palmitoylates the glucose transporter GLUT4/SLC2A4 and controls the insulin-dependent translocation of GLUT4 to the plasma membrane. In brain, could also palmitoylate SNAP25 and DLG4/PSD95. Could also palmitoylate DNAJC5 and regulate its localization to the Golgi membrane. Could also palmitoylate NCDN. May play a role in follicle stimulation hormone (FSH) activation of testicular Sertoli cells. Activates pyroptosis by catalyzing palmitoylation of gasdermin-D (GSDMD). The chain is Palmitoyltransferase ZDHHC7 from Mus musculus (Mouse).